The chain runs to 131 residues: Profilin-3 (131 aa).

C13 and C115 are joined by a disulfide. Positions 81–97 (AVIRGKKGAGGITIKKT) match the Involved in PIP2 interaction motif. At T111 the chain carries Phosphothreonine.

This sequence belongs to the profilin family. Occurs in many kinds of cells as a complex with monomeric actin in a 1:1 ratio. In terms of processing, phosphorylated by MAP kinases.

It is found in the cytoplasm. The protein resides in the cytoskeleton. Its function is as follows. Binds to actin and affects the structure of the cytoskeleton. At high concentrations, profilin prevents the polymerization of actin, whereas it enhances it at low concentrations. By binding to PIP2, it inhibits the formation of IP3 and DG. The protein is Profilin-3 (PRO3) of Phleum pratense (Common timothy).